The primary structure comprises 537 residues: Phosphoenolpyruvate carboxykinase (ATP) (537 aa).

The substrate site is built by arginine 61, tyrosine 195, and lysine 201. ATP contacts are provided by residues lysine 201, histidine 220, and 236–244; that span reads GLSGTGKTT. Mn(2+) contacts are provided by lysine 201 and histidine 220. A Mn(2+)-binding site is contributed by aspartate 257. ATP-binding residues include glutamate 285, arginine 323, and threonine 448. Arginine 323 provides a ligand contact to substrate.

The protein belongs to the phosphoenolpyruvate carboxykinase (ATP) family. Mn(2+) serves as cofactor.

The protein localises to the cytoplasm. The enzyme catalyses oxaloacetate + ATP = phosphoenolpyruvate + ADP + CO2. It participates in carbohydrate biosynthesis; gluconeogenesis. Its function is as follows. Involved in the gluconeogenesis. Catalyzes the conversion of oxaloacetate (OAA) to phosphoenolpyruvate (PEP) through direct phosphoryl transfer between the nucleoside triphosphate and OAA. In Parvibaculum lavamentivorans (strain DS-1 / DSM 13023 / NCIMB 13966), this protein is Phosphoenolpyruvate carboxykinase (ATP).